The primary structure comprises 151 residues: Large ribosomal subunit protein bL9 (151 aa).

The protein belongs to the bacterial ribosomal protein bL9 family.

Its function is as follows. Binds to the 23S rRNA. The protein is Large ribosomal subunit protein bL9 of Mycobacteroides abscessus (strain ATCC 19977 / DSM 44196 / CCUG 20993 / CIP 104536 / JCM 13569 / NCTC 13031 / TMC 1543 / L948) (Mycobacterium abscessus).